The sequence spans 390 residues: Phosphoprotein (390 aa).

A phosphothreonine mark is found at T10 and T16. The span at 54–65 (QKNIQHPTASHQ) shows a compositional bias: polar residues. 2 disordered regions span residues 54-98 (QKNI…EPLF) and 144-183 (RTST…KERS). A Phosphoserine modification is found at S69. Residues T91, T150, and T164 each carry the phosphothreonine modification. Residue S187 is modified to Phosphoserine. At T249 the chain carries Phosphothreonine. At S256 the chain carries Phosphoserine. A phosphothreonine mark is found at T257 and T281. 2 positions are modified to phosphoserine: S291 and S293. A Phosphothreonine modification is found at T297. S300 and S373 each carry phosphoserine. Positions 342–390 (AGRKVMITKMITDCVANPQMKQAFEQRLAKASTEDALNDIKKDIIRSAI) are interaction with the nucleoprotein. T374 carries the phosphothreonine modification.

This sequence belongs to the rubulavirus/avulavirus P protein family. In terms of assembly, homotetramer. Interacts (via multimerization domain) with polymerase L; this interaction forms the polymerase L-P complex. Interacts (via N-terminus) with N0 (via Ncore); this interaction allows P to chaperon N0 to avoid N polymerization before encapsidation. Interacts (via C-terminus) with N-RNA template; this interaction positions the polymerase on the template for both transcription and replication. Interacts with host RPS6KB1 kinase; this interaction may play a role in the viral replication and transcription.

In terms of biological role, essential cofactor of the RNA polymerase L that plays a central role in the transcription and replication by forming the polymerase complex with RNA polymerase L and recruiting L to the genomic N-RNA template for RNA synthesis. Also plays a central role in the encapsidation of nascent RNA chains by forming the encapsidation complex with the nucleocapsid protein N (N-P complex). Acts as a chaperone for newly synthesized free N protein, so-called N0, allowing encapsidation of nascent RNA chains during replication. The nucleoprotein protein N prevents excessive phosphorylation of P, which leads to down-regulation of viral transcription/ replication. Participates, together with N, in the formation of viral factories (viroplasms), which are large inclusions in the host cytoplasm where replication takes place. The chain is Phosphoprotein (P/V) from Homo sapiens (Human).